Reading from the N-terminus, the 138-residue chain is Ribosome-binding factor A (138 aa).

Residues 119–138 (RSPEVQRDLGPSNEKDDEQN) form a disordered region.

Belongs to the RbfA family. Monomer. Binds 30S ribosomal subunits, but not 50S ribosomal subunits or 70S ribosomes.

It localises to the cytoplasm. In terms of biological role, one of several proteins that assist in the late maturation steps of the functional core of the 30S ribosomal subunit. Associates with free 30S ribosomal subunits (but not with 30S subunits that are part of 70S ribosomes or polysomes). Required for efficient processing of 16S rRNA. May interact with the 5'-terminal helix region of 16S rRNA. The chain is Ribosome-binding factor A from Agrobacterium fabrum (strain C58 / ATCC 33970) (Agrobacterium tumefaciens (strain C58)).